The following is a 442-amino-acid chain: Inhibitor of Apoptosis OPG037 (442 aa).

ANK repeat units lie at residues 67–96, 100–131, 203–233, 237–267, 292–321, and 323–347; these read DGNY…DPNA, HNKT…KINN, DGNT…DVNK, FGDS…VITD, YDST…ICED, and MYYA…SVDS.

It belongs to the orthopoxvirus OPG037 family. May interact with host caspase-9-Apaf-1 complex.

The protein resides in the host cytoplasm. Functionally, inhibits host apoptosis. Acts by associating with host apoptosome. The polypeptide is Inhibitor of Apoptosis OPG037 (OPG037) (Monkeypox virus).